The following is a 147-amino-acid chain: Large ribosomal subunit protein uL16 (147 aa).

This sequence belongs to the universal ribosomal protein uL16 family. In terms of assembly, part of the 50S ribosomal subunit.

Functionally, binds 23S rRNA and is also seen to make contacts with the A and possibly P site tRNAs. The sequence is that of Large ribosomal subunit protein uL16 from Caldicellulosiruptor bescii (strain ATCC BAA-1888 / DSM 6725 / KCTC 15123 / Z-1320) (Anaerocellum thermophilum).